We begin with the raw amino-acid sequence, 148 residues long: Large ribosomal subunit protein bL9 (148 aa).

This sequence belongs to the bacterial ribosomal protein bL9 family.

In terms of biological role, binds to the 23S rRNA. The protein is Large ribosomal subunit protein bL9 of Pelotomaculum thermopropionicum (strain DSM 13744 / JCM 10971 / SI).